Consider the following 150-residue polypeptide: MSSRFLRTAVARATQQRSMYENPYINRFKARSKVSEDFHKKTTGITGLFVNEHPHRALTVVYGRILRALEQIPRDAAYRKYTEAVVKQRLALVQAENDIKKLEEKIGMGQIEEVIEQAEYELETTRAIVDSKAWEPLVESAPKGQWSWPV.

The protein belongs to the complex I NDUFA5 subunit family. In terms of assembly, complex I is composed of 45 different subunits.

It localises to the mitochondrion inner membrane. In terms of biological role, accessory subunit of the mitochondrial membrane respiratory chain NADH dehydrogenase (Complex I), that is believed not to be involved in catalysis. Complex I functions in the transfer of electrons from NADH to the respiratory chain. The immediate electron acceptor for the enzyme is believed to be ubiquinone. This Caenorhabditis elegans protein is Probable NADH dehydrogenase [ubiquinone] 1 alpha subcomplex subunit 5.